The sequence spans 347 residues: Transcription factor JunD (347 aa).

The disordered stretch occupies residues 1–43; sequence METPFYGDEALSGLGGGASGSGGSFASPGRLFPGAPPTAAAGS. The span at 13–23 shows a compositional bias: gly residues; it reads GLGGGASGSGG. The Menin-binding motif (MBM) signature appears at 27–39; sequence SPGRLFPGAPPTA. The short motif at 46–55 is the MAP kinase docking motif; essential for its phosphorylation element; it reads KKDALTLSLS. The segment at 62–86 is disordered; the sequence is LKPAAAPPPTPLRADGAPSAAPPDG. Low complexity predominate over residues 73–86; sequence LRADGAPSAAPPDG. Ser90 carries the phosphoserine modification. Position 100 is a phosphoserine; by MAPK8 (Ser100). Thr117 bears the Phosphothreonine mark. The interval 244-264 is disordered; it reads QTVPDVPSFGESPPLSPIDMD. Residues Ser251, Ser255, and Ser259 each carry the phosphoserine modification. Residues 268–295 form a basic motif region; the sequence is RIKAERKRLRNRIAASKCRKRKLERISR. In terms of domain architecture, bZIP spans 268 to 331; the sequence is RIKAERKRLR…AQLKQKVLSH (64 aa). The segment at 296–324 is leucine-zipper; that stretch reads LEEKVKTLKSQNTELASTASLLREQVAQL.

This sequence belongs to the bZIP family. Jun subfamily. As to quaternary structure, heterodimer; binds DNA as a heterodimer. Component of an AP-1 transcription factor complex composed of JUN-FOS heterodimers. As part of the AP-1 transcription factor complex, forms heterodimers with FOS proteins, thereby binding to the AP-1 consensus sequence and stimulating transcription. Forms heterodimers with FOSB; thereby binding to the AP-1 consensus sequence. Interacts (via MBM motif) with MEN1; this interaction represses transcriptional activation. Interacts with MAPK10; this interaction is inhibited in the presence of MEN1. Phosphorylated by MAP kinases MAPK8 and MAPK10; phosphorylation is inhibited in the presence of MEN1.

Its subcellular location is the nucleus. Transcription factor binding AP-1 sites. Heterodimerizes with proteins of the FOS family to form an AP-1 transcription factor complex, thereby enhancing their DNA binding activity to an AP-1 consensus sequence 3'-TGA[GC]TCA-5' and enhancing their transcriptional activity. The polypeptide is Transcription factor JunD (JUND) (Homo sapiens (Human)).